Consider the following 122-residue polypeptide: Large ribosomal subunit protein uL14 (122 aa).

This sequence belongs to the universal ribosomal protein uL14 family. In terms of assembly, part of the 50S ribosomal subunit. Forms a cluster with proteins L3 and L19. In the 70S ribosome, L14 and L19 interact and together make contacts with the 16S rRNA in bridges B5 and B8.

In terms of biological role, binds to 23S rRNA. Forms part of two intersubunit bridges in the 70S ribosome. This Methylorubrum populi (strain ATCC BAA-705 / NCIMB 13946 / BJ001) (Methylobacterium populi) protein is Large ribosomal subunit protein uL14.